Consider the following 297-residue polypeptide: Probable tyrosine phosphatase protein J2 (297 aa).

In terms of domain architecture, Tyrosine-protein phosphatase spans 21–286 (DSLSCIIQEY…VFCYHLIHAY (266 aa)). Cys-227 serves as the catalytic Phosphocysteine intermediate.

The protein belongs to the protein-tyrosine phosphatase family.

The enzyme catalyses O-phospho-L-tyrosyl-[protein] + H2O = L-tyrosyl-[protein] + phosphate. The sequence is that of Probable tyrosine phosphatase protein J2 (J3) from Microplitis demolitor (Parasitoid wasp).